The chain runs to 483 residues: MEYAPEFDNSYARQLSGFYTRLQPTPLKGARLLYHSKPLAQELGLDAHWFTEPKTAVWAGEALLPGMEPLAQVYSGHQFGMWAGQLGDGRGILLGEQRLNDGRYMDWHLKGAGLTPYSRMGDGRAVLRSVIREFLASEALHHLGIPTSRALTIVTSDHPIYREQTERGAMLLRVAESHIRFGHFEHFYYRQQPKQVQQLADYVIARHWPQWVGHQECYRLWFTDVVERTARLMAHWQTVGFAHGVMNTDNMSILGITMDYGPFGFLDDYVPGYICNHSDHQGRYAYDNQPAVALWNLHRLGHALSGLMSADQLQLALEAYEPALMVAYGEQMRAKLGFLERDSQDNDLLTGLLSLMIKEGRDYTRTFRLLSEVEVHSAQSPLRDDFIDRAAFDDWYRRYRSRLQQESIDDDQRQQSMKAANPKYILRNYLAQQAITQAEKDDIQPLQRLHQALQQPFTDQPEFDDLAALPPDWGKHLEISCSS.

Residues G87, G89, R90, K110, D122, G123, R173, and R180 each coordinate ATP. D249 serves as the catalytic Proton acceptor. Residues N250 and D259 each contribute to the Mg(2+) site. D259 serves as a coordination point for ATP.

The protein belongs to the SELO family. Mg(2+) serves as cofactor. The cofactor is Mn(2+).

The catalysed reaction is L-seryl-[protein] + ATP = 3-O-(5'-adenylyl)-L-seryl-[protein] + diphosphate. It catalyses the reaction L-threonyl-[protein] + ATP = 3-O-(5'-adenylyl)-L-threonyl-[protein] + diphosphate. The enzyme catalyses L-tyrosyl-[protein] + ATP = O-(5'-adenylyl)-L-tyrosyl-[protein] + diphosphate. It carries out the reaction L-histidyl-[protein] + UTP = N(tele)-(5'-uridylyl)-L-histidyl-[protein] + diphosphate. The catalysed reaction is L-seryl-[protein] + UTP = O-(5'-uridylyl)-L-seryl-[protein] + diphosphate. It catalyses the reaction L-tyrosyl-[protein] + UTP = O-(5'-uridylyl)-L-tyrosyl-[protein] + diphosphate. Nucleotidyltransferase involved in the post-translational modification of proteins. It can catalyze the addition of adenosine monophosphate (AMP) or uridine monophosphate (UMP) to a protein, resulting in modifications known as AMPylation and UMPylation. This is Protein nucleotidyltransferase YdiU from Yersinia pseudotuberculosis serotype O:1b (strain IP 31758).